The sequence spans 594 residues: Protein FAM200C (594 aa).

This Bos taurus (Bovine) protein is Protein FAM200C (FAM200C).